The primary structure comprises 181 residues: Inner membrane-spanning protein YciB (181 aa).

Helical transmembrane passes span 10 to 30, 50 to 70, 80 to 100, 120 to 140, and 148 to 168; these read LIIFFALYKFYDIYVATGALI, MQLITFVMVALFGGMTLALHD, IVYVVFALGLTISQIMGKPAI, WAWVMFFSGCAALNLYVAYHL, and FKVFGLLAATLVFTLLTGGYI.

It belongs to the YciB family.

It is found in the cell inner membrane. Its function is as follows. Plays a role in cell envelope biogenesis, maintenance of cell envelope integrity and membrane homeostasis. The sequence is that of Inner membrane-spanning protein YciB from Vibrio cholerae serotype O1 (strain ATCC 39315 / El Tor Inaba N16961).